The following is a 338-amino-acid chain: GTPase Obg (338 aa).

The region spanning 1-159 (MQFIDQAEIE…RRIRLELKLL (159 aa)) is the Obg domain. Residues 160–328 (AEVGIIGLPN…MLQATWEQLD (169 aa)) form the OBG-type G domain. Residues 166-173 (GLPNAGKS), 191-195 (FTTLI), 213-216 (DIPG), 280-283 (NKLD), and 309-311 (SAV) contribute to the GTP site. Mg(2+)-binding residues include serine 173 and threonine 193.

The protein belongs to the TRAFAC class OBG-HflX-like GTPase superfamily. OBG GTPase family. As to quaternary structure, monomer. The cofactor is Mg(2+).

The protein localises to the cytoplasm. Its function is as follows. An essential GTPase which binds GTP, GDP and possibly (p)ppGpp with moderate affinity, with high nucleotide exchange rates and a fairly low GTP hydrolysis rate. Plays a role in control of the cell cycle, stress response, ribosome biogenesis and in those bacteria that undergo differentiation, in morphogenesis control. The protein is GTPase Obg of Gloeothece citriformis (strain PCC 7424) (Cyanothece sp. (strain PCC 7424)).